Reading from the N-terminus, the 206-residue chain is Bis(5'-adenosyl)-triphosphatase (206 aa).

Positions 3 to 115 constitute an HIT domain; sequence KPIYFSKFLV…KINNVGDLIY (113 aa). The short motif at 96–100 is the Histidine triad motif element; the sequence is HLHTH. The active-site Tele-AMP-histidine intermediate is the H98. A disordered region spans residues 143–164; that stretch reads RQARKNNSTSATVDGDELSQGP.

As to quaternary structure, homodimer. It depends on Mn(2+) as a cofactor.

It localises to the cytoplasm. The protein localises to the nucleus. The protein resides in the mitochondrion. The catalysed reaction is P(1),P(3)-bis(5'-adenosyl) triphosphate + H2O = AMP + ADP + 2 H(+). In terms of biological role, cleaves A-5'-PPP-5'A to yield AMP and ADP. Can cleave all dinucleoside polyphosphates, provided the phosphate chain contains at least 3 phosphates and that 1 of the 2 bases composing the nucleotide is a purine. Is most effective on dinucleoside triphosphates. Negatively regulates intracellular dinucleoside polyphosphate levels, which elevate following heat shock. This chain is Bis(5'-adenosyl)-triphosphatase (HNT2), found in Saccharomyces cerevisiae (strain RM11-1a) (Baker's yeast).